The following is a 456-amino-acid chain: Adenylosuccinate synthetase isozyme 2 (456 aa).

Residues 1-24 form a disordered region; the sequence is MAFAETNPAASSLPNGDCGRPRAR. GTP-binding positions include 39–45 and 67–69; these read GDEGKGK and GHT. D40 functions as the Proton acceptor in the catalytic mechanism. Mg(2+)-binding residues include D40 and G67. D40 contributes to the substrate binding site. Residues 40-43, 65-68, T162, R176, N255, T270, and R334 contribute to the IMP site; these read DEGK and NAGH. Residue H68 is the Proton donor of the active site. 330-336 lines the substrate pocket; it reads VTTGRKR. GTP contacts are provided by residues R336, 362 to 364, and 444 to 447; these read KLD and GVGK.

The protein belongs to the adenylosuccinate synthetase family. In terms of assembly, homodimer. The cofactor is Mg(2+). As to expression, widely expressed.

It localises to the cytoplasm. The protein resides in the mitochondrion. It catalyses the reaction IMP + L-aspartate + GTP = N(6)-(1,2-dicarboxyethyl)-AMP + GDP + phosphate + 2 H(+). Its pathway is purine metabolism; AMP biosynthesis via de novo pathway; AMP from IMP: step 1/2. Its activity is regulated as follows. Inhibited competitively by AMP and IMP and non-competitively by fructose 1,6-bisphosphate. In terms of biological role, plays an important role in the de novo pathway and in the salvage pathway of purine nucleotide biosynthesis. Catalyzes the first committed step in the biosynthesis of AMP from IMP. The sequence is that of Adenylosuccinate synthetase isozyme 2 from Sus scrofa (Pig).